We begin with the raw amino-acid sequence, 340 residues long: Heat-inducible transcription repressor HrcA (340 aa).

Belongs to the HrcA family.

Functionally, negative regulator of class I heat shock genes (grpE-dnaK-dnaJ and groELS operons). Prevents heat-shock induction of these operons. This is Heat-inducible transcription repressor HrcA from Mycoplasma mycoides subsp. mycoides SC (strain CCUG 32753 / NCTC 10114 / PG1).